The primary structure comprises 706 residues: Translation initiation factor IF-2 (706 aa).

Residues K55–I117 are disordered. Basic and acidic residues predominate over residues V67–K81. The segment covering K93–P108 has biased composition (basic residues). Positions S208–E375 constitute a tr-type G domain. The G1 stretch occupies residues G217–T224. G217–T224 is a GTP binding site. The tract at residues G242–H246 is G2. The tract at residues D263 to G266 is G3. GTP-binding positions include D263–H267 and N317–D320. Residues N317–D320 form a G4 region. The interval S353 to I355 is G5.

It belongs to the TRAFAC class translation factor GTPase superfamily. Classic translation factor GTPase family. IF-2 subfamily.

The protein localises to the cytoplasm. One of the essential components for the initiation of protein synthesis. Protects formylmethionyl-tRNA from spontaneous hydrolysis and promotes its binding to the 30S ribosomal subunits. Also involved in the hydrolysis of GTP during the formation of the 70S ribosomal complex. The chain is Translation initiation factor IF-2 from Alkaliphilus metalliredigens (strain QYMF).